Here is a 227-residue protein sequence, read N- to C-terminus: 7-cyano-7-deazaguanine synthase (227 aa).

7–17 (LSGGMDSLVTT) is an ATP binding site. Positions 187, 195, 198, and 201 each coordinate Zn(2+).

It belongs to the QueC family. It depends on Zn(2+) as a cofactor.

It carries out the reaction 7-carboxy-7-deazaguanine + NH4(+) + ATP = 7-cyano-7-deazaguanine + ADP + phosphate + H2O + H(+). It participates in purine metabolism; 7-cyano-7-deazaguanine biosynthesis. Functionally, catalyzes the ATP-dependent conversion of 7-carboxy-7-deazaguanine (CDG) to 7-cyano-7-deazaguanine (preQ(0)). This Chlorobium phaeovibrioides (strain DSM 265 / 1930) (Prosthecochloris vibrioformis (strain DSM 265)) protein is 7-cyano-7-deazaguanine synthase.